Reading from the N-terminus, the 115-residue chain is Class I hydrophobin C (115 aa).

An N-terminal signal peptide occupies residues 1–19 (MFSRVLVAALVALPVLVSA). 4 cysteine pairs are disulfide-bonded: Cys36–Cys93, Cys43–Cys87, Cys44–Cys74, and Cys94–Cys108.

This sequence belongs to the fungal hydrophobin family. Self-assembles to form functional amyloid fibrils called rodlets. Self-assembly into fibrillar rodlets occurs spontaneously at hydrophobic:hydrophilic interfaces and the rodlets further associate laterally to form amphipathic monolayers.

It localises to the secreted. The protein resides in the cell wall. Its function is as follows. Aerial growth, conidiation, and dispersal of filamentous fungi in the environment rely upon a capability of their secreting small amphipathic proteins called hydrophobins (HPBs) with low sequence identity. Class I can self-assemble into an outermost layer of rodlet bundles on aerial cell surfaces, conferring cellular hydrophobicity that supports fungal growth, development and dispersal; whereas Class II form highly ordered films at water-air interfaces through intermolecular interactions but contribute nothing to the rodlet structure. The sequence is that of Class I hydrophobin C from Agaricus bisporus (White button mushroom).